The following is a 379-amino-acid chain: Protein COS2 (379 aa).

Residues 1–72 (MKENELKNEK…WKLSNNCIYP (72 aa)) are Cytoplasmic-facing. A helical membrane pass occupies residues 73–93 (LIVSLLVLFLGPIFVLVICGL). The Extracellular segment spans residues 94–254 (SRKRSLSKQL…FLCCIYVSRG (161 aa)). The chain crosses the membrane as a helical span at residues 255–275 (MCLLLRTLYLGWILFMLVQGF). The Cytoplasmic segment spans residues 276–379 (QNIRVLIMSM…QLSRSEVLLV (104 aa)).

It belongs to the DUP/COS family.

Its subcellular location is the membrane. This chain is Protein COS2 (COS2), found in Saccharomyces cerevisiae (strain ATCC 204508 / S288c) (Baker's yeast).